The following is a 621-amino-acid chain: Phosphoenolpyruvate carboxykinase [GTP] (621 aa).

Substrate-binding positions include Arg-83 and 217–219 (YGG). Mn(2+) contacts are provided by Lys-226 and His-245. Ser-267 provides a ligand contact to substrate. Residue 268 to 273 (MCGKTS) participates in GTP binding. The active site involves Cys-269. Asp-286 lines the Mn(2+) pocket. 381–383 (NAR) is a substrate binding site. GTP-binding residues include Arg-383 and Arg-415.

Belongs to the phosphoenolpyruvate carboxykinase [GTP] family. Mn(2+) serves as cofactor.

It is found in the cytoplasm. The catalysed reaction is oxaloacetate + GTP = phosphoenolpyruvate + GDP + CO2. It participates in carbohydrate biosynthesis; gluconeogenesis. Its function is as follows. Catalyzes the conversion of oxaloacetate (OAA) to phosphoenolpyruvate (PEP), the rate-limiting step in the metabolic pathway that produces glucose from lactate and other precursors derived from the citric acid cycle. The sequence is that of Phosphoenolpyruvate carboxykinase [GTP] from Pyrococcus horikoshii (strain ATCC 700860 / DSM 12428 / JCM 9974 / NBRC 100139 / OT-3).